The chain runs to 82 residues: MRVEICIAKEKITKMPNGAVDALKEELTRRISKRYDDVEVIVKATSNDGLSVTRTADKDSAKTFVQETLKDTWESADEWFVR.

It belongs to the DinI family.

The protein is DinI-like protein of Enterobacteria phage VT1-Sakai.